The primary structure comprises 143 residues: Large ribosomal subunit protein uL11 (143 aa).

The protein belongs to the universal ribosomal protein uL11 family. In terms of assembly, part of the ribosomal stalk of the 50S ribosomal subunit. Interacts with L10 and the large rRNA to form the base of the stalk. L10 forms an elongated spine to which L12 dimers bind in a sequential fashion forming a multimeric L10(L12)X complex. One or more lysine residues are methylated.

Functionally, forms part of the ribosomal stalk which helps the ribosome interact with GTP-bound translation factors. The protein is Large ribosomal subunit protein uL11 of Pseudomonas paraeruginosa (strain DSM 24068 / PA7) (Pseudomonas aeruginosa (strain PA7)).